Consider the following 71-residue polypeptide: DNA-directed RNA polymerase subunit epsilon (71 aa).

This sequence belongs to the RNA polymerase subunit epsilon family. RNAP is composed of a core of 2 alpha, a beta and a beta' subunit. The core is associated with a delta subunit, and at least one of epsilon or omega. When a sigma factor is associated with the core the holoenzyme is formed, which can initiate transcription.

The enzyme catalyses RNA(n) + a ribonucleoside 5'-triphosphate = RNA(n+1) + diphosphate. Its function is as follows. A non-essential component of RNA polymerase (RNAP). The polypeptide is DNA-directed RNA polymerase subunit epsilon (Geobacillus kaustophilus (strain HTA426)).